Here is a 125-residue protein sequence, read N- to C-terminus: Large ribosomal subunit protein bL12 (125 aa).

This sequence belongs to the bacterial ribosomal protein bL12 family. As to quaternary structure, homodimer. Part of the ribosomal stalk of the 50S ribosomal subunit. Forms a multimeric L10(L12)X complex, where L10 forms an elongated spine to which 2 to 4 L12 dimers bind in a sequential fashion. Binds GTP-bound translation factors.

Forms part of the ribosomal stalk which helps the ribosome interact with GTP-bound translation factors. Is thus essential for accurate translation. This is Large ribosomal subunit protein bL12 from Thermus thermophilus (strain ATCC BAA-163 / DSM 7039 / HB27).